We begin with the raw amino-acid sequence, 336 residues long: Ultraviolet-sensitive opsin (336 aa).

Residues 1-29 are Extracellular-facing; that stretch reads MDAWTYQFGNLSKISPFEGPQYHLAPKWA. N10 is a glycosylation site (N-linked (GlcNAc...) asparagine). The helical transmembrane segment at 30–54 threads the bilayer; the sequence is FYLQAAFMGFVFFVGTPLNAIVLFV. Topologically, residues 55-66 are cytoplasmic; that stretch reads TMKYKKLRQPLN. The helical transmembrane segment at 67-91 threads the bilayer; sequence YILVNISLGGFIFDTFSVSQVFFSA. Over 92 to 106 the chain is Extracellular; the sequence is LRGYYFFGYTLCAME. The cysteines at positions 103 and 180 are disulfide-linked. A helical membrane pass occupies residues 107 to 126; sequence AAMGSIAGLVTGWSLAVLAF. Residues 127–145 lie on the Cytoplasmic side of the membrane; sequence ERYVVICKPFGSFKFGQSQ. Residues 146 to 169 traverse the membrane as a helical segment; that stretch reads ALGAVALTWIIGIGCATPPFWGWS. Over 170–195 the chain is Extracellular; sequence RYIPEGIGTACGPDWYTKNEEYNTES. The helical transmembrane segment at 196 to 223 threads the bilayer; it reads YTYFLLVSCFMMPIMIITFSYSQLLGAL. The Cytoplasmic portion of the chain corresponds to 224 to 245; it reads RAVAAQQAESASTQKAEKEVSR. A helical transmembrane segment spans residues 246–269; sequence MVVVMVGSFVVCYGPYAITALYFS. Over 270 to 277 the chain is Extracellular; it reads YAEDSNKD. The helical transmembrane segment at 278–302 threads the bilayer; it reads YRLVAIPSLFSKSSCVYNPLIYAFM. N6-(retinylidene)lysine is present on K289. Residues 303–336 lie on the Cytoplasmic side of the membrane; sequence NKQFNACIMETVFGKKIDESSEVSSKTETSSVSA.

It belongs to the G-protein coupled receptor 1 family. Opsin subfamily. In terms of processing, phosphorylated on some or all of the serine and threonine residues present in the C-terminal region.

It localises to the membrane. In terms of biological role, visual pigments are the light-absorbing molecules that mediate vision. They consist of an apoprotein, opsin, covalently linked to cis-retinal. This is Ultraviolet-sensitive opsin from Carassius auratus (Goldfish).